The following is a 68-amino-acid chain: Ribosome modulation factor (68 aa).

The protein belongs to the ribosome modulation factor family.

Its subcellular location is the cytoplasm. Functionally, during stationary phase, converts 70S ribosomes to an inactive dimeric form (100S ribosomes). The sequence is that of Ribosome modulation factor from Saccharophagus degradans (strain 2-40 / ATCC 43961 / DSM 17024).